The sequence spans 88 residues: Small cysteine-rich outer membrane protein OmcA (88 aa).

The signal sequence occupies residues 1–18 (MKKTALLAALCSVVSLSS). A lipid anchor (N-palmitoyl cysteine) is attached at C19. A lipid anchor (S-diacylglycerol cysteine) is attached at C19.

Part of a disulfide cross-linked outer membrane complex (COMC) composed of the major outer membrane porin (MOMP), the small cysteine-rich protein (OmcA) and the large cysteine-rich periplasmic protein (OmcB).

It localises to the cell outer membrane. In terms of biological role, in elementary bodies (EBs, the infectious stage, which is able to survive outside the host cell) provides the structural integrity of the outer envelope through disulfide cross-links with the large cysteine-rich periplasmic protein and the major outer membrane porin. It has been described in publications as the Sarkosyl-insoluble COMC (Chlamydia outer membrane complex), and serves as the functional equivalent of peptidoglycan. The protein is Small cysteine-rich outer membrane protein OmcA (omcA) of Chlamydia trachomatis serovar B (strain Jali20/OT).